The chain runs to 340 residues: MVYNLGQLAQQLNAQLVGDAELNIYRLATFEKAAQGDITFVSDKNLLTRLDECNASAIVLPNSFKQGYQGNALFMETPYVGYALLARIFDTTPNPQPAIAASAQIHKNAIIGQNVTIAHNVVIEEGVVIGDNCQIMDNVVIGQYSTLGENTRIYPNATLYHQTELGKRCIIHANAVIGSDGFGNAPYQGTWIKIPQIGKVIIGDDVEIGASTTIDRGGLSDTLIANGVKIDNQCQIAHNVSIGAHTAIAGGSNVAGSTKIGSNCIVGGCVAINGHITIVDNVVVTGDSMVMRSITEPGIYSSGVPAQKNKAWRKTTAHTLKIDDLFKRVKALEKQLKDNT.

Histidine 238 functions as the Proton acceptor in the catalytic mechanism.

The protein belongs to the transferase hexapeptide repeat family. LpxD subfamily. Homotrimer.

The enzyme catalyses a UDP-3-O-[(3R)-3-hydroxyacyl]-alpha-D-glucosamine + a (3R)-hydroxyacyl-[ACP] = a UDP-2-N,3-O-bis[(3R)-3-hydroxyacyl]-alpha-D-glucosamine + holo-[ACP] + H(+). The protein operates within bacterial outer membrane biogenesis; LPS lipid A biosynthesis. In terms of biological role, catalyzes the N-acylation of UDP-3-O-acylglucosamine using 3-hydroxyacyl-ACP as the acyl donor. Is involved in the biosynthesis of lipid A, a phosphorylated glycolipid that anchors the lipopolysaccharide to the outer membrane of the cell. The polypeptide is UDP-3-O-acylglucosamine N-acyltransferase (Psychromonas ingrahamii (strain DSM 17664 / CCUG 51855 / 37)).